Here is a 1475-residue protein sequence, read N- to C-terminus: Protein Shroom4 (1475 aa).

The 83-residue stretch at 10-92 folds into the PDZ domain; the sequence is YVPVQLQGGA…ILKLIVRRRN (83 aa). 2 disordered regions span residues 151–175 and 202–321; these read EKSS…GHLL and CALS…PPRS. Residues 249–258 show a composition bias toward polar residues; the sequence is TSTSHASSYS. Positions 294-312 are enriched in basic and acidic residues; that stretch reads EQHRASEPVDSLPQKEKPG. The residue at position 412 (S412) is a Phosphoserine. Disordered regions lie at residues 432-523, 542-577, 610-644, and 658-688; these read SKGM…PSAT, HTEA…NRRR, NEAV…SPGD, and SECL…GQSS. Residues 471–485 are compositionally biased toward basic and acidic residues; that stretch reads QTRKERKTTPLDDKL. A compositionally biased stretch (polar residues) spans 513–523; the sequence is SDLTSQQPSAT. The segment covering 542–557 has biased composition (basic and acidic residues); that stretch reads HTEASEEGDNEPKECG. Over residues 558 to 568 the composition is skewed to gly residues; that stretch reads RLGGRRSGGPR. Composition is skewed to low complexity over residues 624-635 and 658-667; these read PLSASNASLLPS and SECLSQASES. S722 is subject to Phosphoserine. 2 stretches are compositionally biased toward polar residues: residues 727–738 and 775–791; these read AQPQVALSTEAP and KSLS…HNNK. 2 disordered regions span residues 727 to 753 and 772 to 791; these read AQPQ…STPQ and ESSK…HNNK. S1010 bears the Phosphoserine mark. 2 disordered regions span residues 1022 to 1041 and 1055 to 1185; these read SNKP…ASMP and SLEP…QSLQ. A compositionally biased stretch (pro residues) spans 1090-1099; sequence FPPPRPPPPN. Positions 1110 to 1125 are enriched in low complexity; that stretch reads QLQQQQQQQQQQQQQQ. A compositionally biased stretch (acidic residues) spans 1128–1145; that stretch reads EEEEEKEQEEEGEKEEDL. The segment covering 1149-1168 has biased composition (polar residues); sequence YFSSELTGSCAPNTEEQPQS. Residues 1190-1469 enclose the ASD2 domain; the sequence is FALHPSNFVP…QLKCLKESLH (280 aa). A coiled-coil region spans residues 1380–1470; it reads SESNQEKLVL…LKCLKESLHL (91 aa).

This sequence belongs to the shroom family. Interacts directly with F-actin. As to expression, detected in most adult tissues examined. Expressed in brain, lung, heart, liver, kidney, muscle and ovary. Expressed throughout the brain, with high expression in the brain stem and cerebellum and weaker expression in the hypothalamus, the hippocampus and the olfactory bulb. Expressed in wide range of cell types during development, including vascular endothelium and the polarized epithelium of the neural tube and kidney.

It localises to the cytoplasm. Its subcellular location is the cytoskeleton. Functionally, probable regulator of cytoskeletal architecture that plays an important role in development. May regulate cellular and cytoskeletal architecture by modulating the spatial distribution of myosin II. The sequence is that of Protein Shroom4 (Shroom4) from Mus musculus (Mouse).